The following is a 92-amino-acid chain: Progonadoliberin-1 (92 aa).

The signal sequence occupies residues 1 to 23; it reads MELVPKFLAGLILLTLCVGGCYA. Glutamine 24 is modified (pyrrolidone carboxylic acid). Glycine amide is present on glycine 33.

The protein belongs to the GnRH family.

Its subcellular location is the secreted. Stimulates the secretion of gonadotropins; it stimulates the secretion of both luteinizing and follicle-stimulating hormones. This Tupaia belangeri (Common tree shrew) protein is Progonadoliberin-1 (GNRH1).